The following is a 664-amino-acid chain: Two-component response regulator ARR2 (664 aa).

The disordered stretch occupies residues 1–21 (MVNPGHGRGPDSGTAAGGSNS). One can recognise a Response regulatory domain in the interval 29 to 144 (RVLVVDDDPT…ALKNIWQHVV (116 aa)). The residue at position 80 (Asp80) is a 4-aspartylphosphate. A disordered region spans residues 151-215 (WNVSEHSGGS…DDKEDSSSLK (65 aa)). The segment covering 165–178 (GGDRDRQQQHREDA) has biased composition (basic and acidic residues). Polar residues predominate over residues 180 to 191 (NNSSSVNEGNGR). Positions 200 to 209 (EVDDQGDDKE) are enriched in acidic residues. The Nuclear localization signal signature appears at 215–218 (KKPR). Residues 218–268 (RVVWSVELHQQFVAAVNQLGVDKAVPKKILEMMNVPGLTRENVASHLQKYR) constitute a DNA-binding region (myb-like GARP). The span at 554–567 (AAFSTSEAYSSSST) shows a compositional bias: low complexity. The disordered stretch occupies residues 554–589 (AAFSTSEAYSSSSTQRKRRETDATVVGEHGQNLQSP).

Belongs to the ARR family. Type-B subfamily. In terms of assembly, binds the target DNA as a monomer. Interacts with histidine-containing phosphotransfer proteins. In terms of processing, two-component system major event consists of a His-to-Asp phosphorelay between a sensor histidine kinase (HK) and a response regulator (RR). In plants, the His-to-Asp phosphorelay involves an additional intermediate named Histidine-containing phosphotransfer protein (HPt). This multistep phosphorelay consists of a His-Asp-His-Asp sequential transfer of a phosphate group between first a His and an Asp of the HK protein, followed by the transfer to a conserved His of the HPt protein and finally the transfer to an Asp in the receiver domain of the RR protein. Phosphorylated in response to cytokinin mediated by AHK3. In terms of tissue distribution, detected in the whole plant. Predominantly expressed in pollen.

It localises to the nucleus. Transcriptional activator that binds specifically to the DNA sequence 5'-[AG]GATT-3'. Functions as a response regulator involved in His-to-Asp phosphorelay signal transduction system. Phosphorylation of the Asp residue in the receiver domain activates the ability of the protein to promote the transcription of target genes. Could directly activate some type-A response regulators in response to cytokinins. Involved in the expression of nuclear genes for components of mitochondrial complex I. Promotes cytokinin-mediated leaf longevity. Involved in the ethylene signaling pathway in an ETR1-dependent manner and in the cytokinin signaling pathway. This is Two-component response regulator ARR2 (ARR2) from Arabidopsis thaliana (Mouse-ear cress).